The following is a 280-amino-acid chain: MKINFTKMEGIGNDYVYIDATKNDIRLSPEQIQKLSDRNFGIGGDGVIFIRNSNSGEFQMDMYNSDGSSSEMCGNGVRCVGKFVYDHGLTKNQKPTIETGKGVLTLDLKTGTNGKVEMVTVDMGEPILKPSLVPIVWKGDEPVINQVIEVQGKQYHFTAVSMGNPHCVIYVDDADDFPVREIGPIIENHPFFPRRVNVEFVSIKGKDHLYQRTWERGTGETLACGTGACAVTVASILNGKTGRSVRIDLRGGTLHIEWQENGSVFMTGPAKEVFSGEVEI.

Substrate-binding residues include asparagine 13 and asparagine 64. Cysteine 73 (proton donor) is an active-site residue. Residues 74-75, asparagine 164, asparagine 197, and 215-216 each bind substrate; these read GN and ER. Cysteine 224 serves as the catalytic Proton acceptor. 225–226 serves as a coordination point for substrate; sequence GT.

The protein belongs to the diaminopimelate epimerase family. In terms of assembly, homodimer.

The protein localises to the cytoplasm. It carries out the reaction (2S,6S)-2,6-diaminopimelate = meso-2,6-diaminopimelate. Its pathway is amino-acid biosynthesis; L-lysine biosynthesis via DAP pathway; DL-2,6-diaminopimelate from LL-2,6-diaminopimelate: step 1/1. Functionally, catalyzes the stereoinversion of LL-2,6-diaminopimelate (L,L-DAP) to meso-diaminopimelate (meso-DAP), a precursor of L-lysine and an essential component of the bacterial peptidoglycan. The chain is Diaminopimelate epimerase from Leptospira biflexa serovar Patoc (strain Patoc 1 / Ames).